Consider the following 477-residue polypeptide: Probable cytosolic Fe-S cluster assembly factor GK14772 (477 aa).

[4Fe-4S] cluster-binding residues include C23, C69, C72, C75, C188, C244, C396, and C400.

It belongs to the NARF family.

Component of the cytosolic iron-sulfur (Fe/S) protein assembly machinery. Required for maturation of extramitochondrial Fe/S proteins. The sequence is that of Probable cytosolic Fe-S cluster assembly factor GK14772 from Drosophila willistoni (Fruit fly).